We begin with the raw amino-acid sequence, 96 residues long: Small ribosomal subunit protein bS20 (96 aa).

This sequence belongs to the bacterial ribosomal protein bS20 family.

Binds directly to 16S ribosomal RNA. In Anaplasma marginale (strain St. Maries), this protein is Small ribosomal subunit protein bS20.